The sequence spans 118 residues: UPF0342 protein Hore_03100 (118 aa).

This sequence belongs to the UPF0342 family.

The protein is UPF0342 protein Hore_03100 of Halothermothrix orenii (strain H 168 / OCM 544 / DSM 9562).